The primary structure comprises 169 residues: General odorant-binding protein 57a (169 aa).

The signal sequence occupies residues 1 to 20; it reads MFNTRLAIFLLLIVVSLSQA. 3 disulfide bridges follow: Cys-39-Cys-77, Cys-73-Cys-120, and Cys-111-Cys-129.

Belongs to the PBP/GOBP family.

In terms of biological role, present in the aqueous fluid surrounding olfactory sensory dendrites and are thought to aid in the capture and transport of hydrophobic odorants into and through this fluid. The polypeptide is General odorant-binding protein 57a (Drosophila melanogaster (Fruit fly)).